The chain runs to 186 residues: Threonylcarbamoyl-AMP synthase (186 aa).

Positions 3–186 (ILSLSECVDR…IINGSLIRHG (184 aa)) constitute a YrdC-like domain.

Belongs to the SUA5 family. TsaC subfamily.

Its subcellular location is the cytoplasm. The catalysed reaction is L-threonine + hydrogencarbonate + ATP = L-threonylcarbamoyladenylate + diphosphate + H2O. Functionally, required for the formation of a threonylcarbamoyl group on adenosine at position 37 (t(6)A37) in tRNAs that read codons beginning with adenine. Catalyzes the conversion of L-threonine, HCO(3)(-)/CO(2) and ATP to give threonylcarbamoyl-AMP (TC-AMP) as the acyladenylate intermediate, with the release of diphosphate. In Buchnera aphidicola subsp. Baizongia pistaciae (strain Bp), this protein is Threonylcarbamoyl-AMP synthase.